A 349-amino-acid polypeptide reads, in one-letter code: PhoH-like protein (349 aa).

147 to 154 (GPAGTGKT) provides a ligand contact to ATP.

It belongs to the PhoH family.

The protein resides in the cytoplasm. The protein is PhoH-like protein of Mycobacterium leprae (strain TN).